A 322-amino-acid polypeptide reads, in one-letter code: uncharacterized protein (322 aa).

Basic residues-rich tracts occupy residues 1–16 (MPGN…KSGT) and 43–61 (LRPH…RRPV). The tract at residues 1–69 (MPGNSRRRGA…PVKRADETET (69 aa)) is disordered. Gly-261, Ile-281, and Leu-290 together coordinate S-adenosyl-L-methionine.

This sequence belongs to the class IV-like SAM-binding methyltransferase superfamily. RNA methyltransferase TrmH family.

This is an uncharacterized protein from Mycobacterium tuberculosis (strain CDC 1551 / Oshkosh).